Here is a 355-residue protein sequence, read N- to C-terminus: MSNVIIDLKNIDITFTQKRRTIQAVKDVSIQIEKGDIYGIVGYSGAGKSTLVRAINLLQVPTAGKITIGEDVTFENGQVQLTTKELRQKRQTIGMIFQHFNLMAQKTAYENVAFALRHSKLSNEEKDKKIRGLLELVDLADRAENYPAQLSGGQKQRVAIARALANDPEILISDESTSALDPKTTKQILSLLQDLNKKLGLTVVMITHEMQIVKDICNRVAVMQNGQLLEEGSVLDIFSNPQEDLTQEFIETAAGIEDALAKINAQPLVKNLPASALLVQLKYVGSSTDRPLLTEIFKDFGVSGNILYGNVEILGDTPVGELVVVLDGDSDKVIAALKAIENAGVSLRVLKKGAQ.

The ABC transporter domain maps to 8–250 (LKNIDITFTQ…PQEDLTQEFI (243 aa)). 42-49 (GYSGAGKS) is an ATP binding site.

Belongs to the ABC transporter superfamily. Methionine importer (TC 3.A.1.24) family. As to quaternary structure, the complex is composed of two ATP-binding proteins (MetN), two transmembrane proteins (MetI) and a solute-binding protein (MetQ).

The protein resides in the cell membrane. It carries out the reaction L-methionine(out) + ATP + H2O = L-methionine(in) + ADP + phosphate + H(+). It catalyses the reaction D-methionine(out) + ATP + H2O = D-methionine(in) + ADP + phosphate + H(+). Its function is as follows. Part of the ABC transporter complex MetNIQ involved in methionine import. Responsible for energy coupling to the transport system. This chain is Methionine import ATP-binding protein MetN, found in Streptococcus thermophilus (strain CNRZ 1066).